A 314-amino-acid chain; its full sequence is 4-hydroxy-3-methylbut-2-enyl diphosphate reductase (314 aa).

Cysteine 12 contributes to the [4Fe-4S] cluster binding site. Residues histidine 41 and histidine 74 each coordinate (2E)-4-hydroxy-3-methylbut-2-enyl diphosphate. Histidine 41 and histidine 74 together coordinate dimethylallyl diphosphate. Isopentenyl diphosphate contacts are provided by histidine 41 and histidine 74. Cysteine 96 provides a ligand contact to [4Fe-4S] cluster. A (2E)-4-hydroxy-3-methylbut-2-enyl diphosphate-binding site is contributed by histidine 124. Histidine 124 contributes to the dimethylallyl diphosphate binding site. Histidine 124 contacts isopentenyl diphosphate. Glutamate 126 acts as the Proton donor in catalysis. Position 168 (threonine 168) interacts with (2E)-4-hydroxy-3-methylbut-2-enyl diphosphate. Cysteine 198 provides a ligand contact to [4Fe-4S] cluster. (2E)-4-hydroxy-3-methylbut-2-enyl diphosphate contacts are provided by serine 226, serine 227, asparagine 228, and serine 270. Positions 226, 227, 228, and 270 each coordinate dimethylallyl diphosphate. Serine 226, serine 227, asparagine 228, and serine 270 together coordinate isopentenyl diphosphate.

It belongs to the IspH family. [4Fe-4S] cluster is required as a cofactor.

The catalysed reaction is isopentenyl diphosphate + 2 oxidized [2Fe-2S]-[ferredoxin] + H2O = (2E)-4-hydroxy-3-methylbut-2-enyl diphosphate + 2 reduced [2Fe-2S]-[ferredoxin] + 2 H(+). It carries out the reaction dimethylallyl diphosphate + 2 oxidized [2Fe-2S]-[ferredoxin] + H2O = (2E)-4-hydroxy-3-methylbut-2-enyl diphosphate + 2 reduced [2Fe-2S]-[ferredoxin] + 2 H(+). It participates in isoprenoid biosynthesis; dimethylallyl diphosphate biosynthesis; dimethylallyl diphosphate from (2E)-4-hydroxy-3-methylbutenyl diphosphate: step 1/1. Its pathway is isoprenoid biosynthesis; isopentenyl diphosphate biosynthesis via DXP pathway; isopentenyl diphosphate from 1-deoxy-D-xylulose 5-phosphate: step 6/6. Functionally, catalyzes the conversion of 1-hydroxy-2-methyl-2-(E)-butenyl 4-diphosphate (HMBPP) into a mixture of isopentenyl diphosphate (IPP) and dimethylallyl diphosphate (DMAPP). Acts in the terminal step of the DOXP/MEP pathway for isoprenoid precursor biosynthesis. The chain is 4-hydroxy-3-methylbut-2-enyl diphosphate reductase from Pseudomonas fluorescens (strain Pf0-1).